A 537-amino-acid chain; its full sequence is CTP synthase (537 aa).

Residues Met1–Leu265 are amidoligase domain. Ser13 contributes to the CTP binding site. Ser13 serves as a coordination point for UTP. Residue Gly14–Ile19 coordinates ATP. Tyr54 contributes to the L-glutamine binding site. Position 71 (Asp71) interacts with ATP. Residues Asp71 and Glu139 each coordinate Mg(2+). Residues Asp146–Glu148, Lys186–Gln191, and Lys222 contribute to the CTP site. UTP is bound by residues Lys186–Gln191 and Lys222. In terms of domain architecture, Glutamine amidotransferase type-1 spans Glu290–Glu532. Position 351 (Gly351) interacts with L-glutamine. Cys378 functions as the Nucleophile; for glutamine hydrolysis in the catalytic mechanism. L-glutamine contacts are provided by residues Phe379–Gln382, Glu402, and Arg459. Residues His505 and Glu507 contribute to the active site.

The protein belongs to the CTP synthase family. Homotetramer.

It catalyses the reaction UTP + L-glutamine + ATP + H2O = CTP + L-glutamate + ADP + phosphate + 2 H(+). The enzyme catalyses L-glutamine + H2O = L-glutamate + NH4(+). The catalysed reaction is UTP + NH4(+) + ATP = CTP + ADP + phosphate + 2 H(+). Its pathway is pyrimidine metabolism; CTP biosynthesis via de novo pathway; CTP from UDP: step 2/2. Allosterically activated by GTP, when glutamine is the substrate; GTP has no effect on the reaction when ammonia is the substrate. The allosteric effector GTP functions by stabilizing the protein conformation that binds the tetrahedral intermediate(s) formed during glutamine hydrolysis. Inhibited by the product CTP, via allosteric rather than competitive inhibition. Its function is as follows. Catalyzes the ATP-dependent amination of UTP to CTP with either L-glutamine or ammonia as the source of nitrogen. Regulates intracellular CTP levels through interactions with the four ribonucleotide triphosphates. In Pyrococcus abyssi (strain GE5 / Orsay), this protein is CTP synthase.